Here is a 583-residue protein sequence, read N- to C-terminus: Multidrug transporter QDR2 (583 aa).

The disordered stretch occupies residues 23 to 46; that stretch reads EKYDGPDLSEVDSEDNDKMIKTNE. N-linked (GlcNAc...) asparagine glycosylation occurs at N60. A helical transmembrane segment spans residues 88-108; that stretch reads AYTGLFSTMAGAIYYPVLSVI. N-linked (GlcNAc...) asparagine glycosylation is present at N120. The next 5 helical transmembrane spans lie at 121–141, 148–168, 178–198, 208–228, and 238–258; these read ITVV…GGLA, PVVL…ACAQ, CLQA…IGDV, VGYI…IGAG, and IFWF…IMLP. An N-linked (GlcNAc...) asparagine glycan is attached at N267. The next 2 membrane-spanning stretches (helical) occupy residues 323–342 and 354–374; these read ILLV…QTAL and VAKI…SIVT. An N-linked (GlcNAc...) asparagine glycan is attached at N380. 4 helical membrane passes run 432–452, 458–478, 493–513, and 524–544; these read HAAF…GWCI, LASV…ILTF, TATG…IGCL, and GVFT…FYLL.

The protein belongs to the major facilitator superfamily. CAR1 family.

The protein localises to the cell membrane. Multidrug resistance transporter involved in resistance to the antifungal drugs miconazole, tioconazole, clotrimazole, and ketoconazole; as well as to quinidine. Decreases the intracellular accumulation of clotrimazole in and plays a role in the extrusion of this antifungal from preloaded cells. The protein is Multidrug transporter QDR2 of Candida glabrata (strain ATCC 2001 / BCRC 20586 / JCM 3761 / NBRC 0622 / NRRL Y-65 / CBS 138) (Yeast).